Consider the following 205-residue polypeptide: Recombination protein RecR (205 aa).

The segment at 59 to 74 adopts a C4-type zinc-finger fold; it reads CARCNTFCEGGLCDIC. Residues 82 to 177 form the Toprim domain; the sequence is RRLMVVHMPA…KVSRLSQGIP (96 aa).

This sequence belongs to the RecR family.

In terms of biological role, may play a role in DNA repair. It seems to be involved in an RecBC-independent recombinational process of DNA repair. It may act with RecF and RecO. This is Recombination protein RecR from Neisseria meningitidis serogroup A / serotype 4A (strain DSM 15465 / Z2491).